A 396-amino-acid polypeptide reads, in one-letter code: Putative nickel insertion protein (396 aa).

Belongs to the LarC family.

The protein is Putative nickel insertion protein of Methanosarcina mazei (strain ATCC BAA-159 / DSM 3647 / Goe1 / Go1 / JCM 11833 / OCM 88) (Methanosarcina frisia).